A 450-amino-acid chain; its full sequence is UDP-N-acetylmuramoylalanine--D-glutamate ligase (450 aa).

119–125 is an ATP binding site; the sequence is GSNGKTT.

It belongs to the MurCDEF family.

It is found in the cytoplasm. The enzyme catalyses UDP-N-acetyl-alpha-D-muramoyl-L-alanine + D-glutamate + ATP = UDP-N-acetyl-alpha-D-muramoyl-L-alanyl-D-glutamate + ADP + phosphate + H(+). It functions in the pathway cell wall biogenesis; peptidoglycan biosynthesis. Cell wall formation. Catalyzes the addition of glutamate to the nucleotide precursor UDP-N-acetylmuramoyl-L-alanine (UMA). This is UDP-N-acetylmuramoylalanine--D-glutamate ligase from Streptococcus pneumoniae (strain JJA).